The sequence spans 406 residues: Bifunctional enzyme IspD/IspF (406 aa).

Positions 1–246 are 2-C-methyl-D-erythritol 4-phosphate cytidylyltransferase; sequence MTQMHSTQPM…KLSAGLLPDV (246 aa). Positions 247-406 are 2-C-methyl-D-erythritol 2,4-cyclodiphosphate synthase; sequence RTGNGYDVHQ…ATVVYRGGRP (160 aa). The a divalent metal cation site is built by Asp253 and His255. 4-CDP-2-C-methyl-D-erythritol 2-phosphate-binding positions include 253-255 and 279-280; these read DVH and HS. His287 serves as a coordination point for a divalent metal cation. Residues 301-303, 377-380, Phe384, and Arg387 contribute to the 4-CDP-2-C-methyl-D-erythritol 2-phosphate site; these read DIG and TTNE.

In the N-terminal section; belongs to the IspD/TarI cytidylyltransferase family. IspD subfamily. It in the C-terminal section; belongs to the IspF family. A divalent metal cation is required as a cofactor.

It carries out the reaction 2-C-methyl-D-erythritol 4-phosphate + CTP + H(+) = 4-CDP-2-C-methyl-D-erythritol + diphosphate. The catalysed reaction is 4-CDP-2-C-methyl-D-erythritol 2-phosphate = 2-C-methyl-D-erythritol 2,4-cyclic diphosphate + CMP. It participates in isoprenoid biosynthesis; isopentenyl diphosphate biosynthesis via DXP pathway; isopentenyl diphosphate from 1-deoxy-D-xylulose 5-phosphate: step 2/6. It functions in the pathway isoprenoid biosynthesis; isopentenyl diphosphate biosynthesis via DXP pathway; isopentenyl diphosphate from 1-deoxy-D-xylulose 5-phosphate: step 4/6. Functionally, bifunctional enzyme that catalyzes the formation of 4-diphosphocytidyl-2-C-methyl-D-erythritol from CTP and 2-C-methyl-D-erythritol 4-phosphate (MEP) (IspD), and catalyzes the conversion of 4-diphosphocytidyl-2-C-methyl-D-erythritol 2-phosphate (CDP-ME2P) to 2-C-methyl-D-erythritol 2,4-cyclodiphosphate (ME-CPP) with a corresponding release of cytidine 5-monophosphate (CMP) (IspF). In Rhizobium rhizogenes (strain K84 / ATCC BAA-868) (Agrobacterium radiobacter), this protein is Bifunctional enzyme IspD/IspF.